A 1666-amino-acid polypeptide reads, in one-letter code: Atrochrysone carboxylic acid synthase PKS4 (1666 aa).

One can recognise a Ketosynthase family 3 (KS3) domain in the interval 15-452 (FEPIAIVGIG…GNAGFMVIEE (438 aa)). Catalysis depends on for beta-ketoacyl synthase activity residues Cys-194, His-332, and His-372. The interval 555-863 (AFCFSGQGGE…WMTALDALMR (309 aa)) is malonyl-CoA:ACP transacylase (MAT) domain. The active-site For acyl/malonyl transferase activity is Ser-632. Positions 905 to 1034 (REVKASSTML…EQDLLESLSL (130 aa)) are N-terminal hotdog fold. In terms of domain architecture, PKS/mFAS DH spans 905–1206 (REVKASSTML…MAKMKIYVLK (302 aa)). The tract at residues 935 to 1203 (LLNHVMAGYT…DVRMAKMKIY (269 aa)) is product template (PT) domain. The C-terminal hotdog fold stretch occupies residues 1050–1206 (STDVLRKELA…MAKMKIYVLK (157 aa)). Ser-1269 carries the O-(pantetheine 4'-phosphoryl)serine modification. In terms of domain architecture, Carrier spans 1331-1395 (ATSPSLPIMP…TSTEPSQTLV (65 aa)). The segment at 1334 to 1397 (PSLPIMPNGV…TEPSQTLVAN (64 aa)) is proline-rich linker region. Residues 1444–1529 (TVIGIHCPGL…PPGVVGLTAQ (86 aa)) form an alpha/beta hydrolase superfamily-type thioesterase (TE) domain region.

The catalysed reaction is holo-[ACP] + 8 malonyl-CoA + 8 H(+) = atrochrysone carboxyl-[ACP] + 8 CO2 + 8 CoA + 2 H2O. The protein operates within secondary metabolite biosynthesis. Its function is as follows. Non-reducing polyketide synthase that synthesizes the universal anthraquinone precursor atrochrysone carboxylic acid from malonyl-CoA. Produces a mixture of both 3R and 3S enantiomers with an excess of the 3S form. PKS4 catalyzes both hepta- and octaketide synthesis and also yields 6-hydroxymusizin, probably via carboxylating activity inherent to the KS domain. In Calonarius odorifer (Mushroom), this protein is Atrochrysone carboxylic acid synthase PKS4.